The sequence spans 319 residues: ATP-dependent 6-phosphofructokinase (319 aa).

G11 provides a ligand contact to ATP. 21–25 is an ADP binding site; that stretch reads RAVVR. ATP-binding positions include 72-73 and 102-105; these read RC and GDGS. Residue D103 coordinates Mg(2+). Substrate is bound at residue 125 to 127; sequence TID. D127 acts as the Proton acceptor in catalysis. R154 serves as a coordination point for ADP. 169 to 171 lines the substrate pocket; the sequence is MGR. ADP contacts are provided by residues 185-187, R211, and 213-215; these read GAE and KKH. Substrate contacts are provided by residues E222, R243, and 249-252; that span reads HIQR.

It belongs to the phosphofructokinase type A (PFKA) family. ATP-dependent PFK group I subfamily. Prokaryotic clade 'B1' sub-subfamily. In terms of assembly, homotetramer. Mg(2+) is required as a cofactor.

The protein resides in the cytoplasm. The enzyme catalyses beta-D-fructose 6-phosphate + ATP = beta-D-fructose 1,6-bisphosphate + ADP + H(+). Its pathway is carbohydrate degradation; glycolysis; D-glyceraldehyde 3-phosphate and glycerone phosphate from D-glucose: step 3/4. Allosterically activated by ADP and other diphosphonucleosides, and allosterically inhibited by phosphoenolpyruvate. Catalyzes the phosphorylation of D-fructose 6-phosphate to fructose 1,6-bisphosphate by ATP, the first committing step of glycolysis. This chain is ATP-dependent 6-phosphofructokinase, found in Lysinibacillus sphaericus (Bacillus sphaericus).